An 874-amino-acid chain; its full sequence is MAVVDDLAPGMDSSPPSEDYGRQPPQDLAAEQSVLGGMLLSKDAIADVLERLRPGDFYRPAHQNVYDAILDLYGRGEPADAVTVAAELDRRGLLRRIGGAPYLHTLISTVPTAANAGYYASIVAEKALLRRLVEAGTRVVQYGYAGAEGADVAEVVDRAQAEIYDVADRRLSEDFVALEDLLQPTMDEIDAIASSGGLARGVATGFTELDEVTNGLHPGQMVIVAARPGVGKSTLGLDFMRSCSIRHRMASVIFSLEMSKSEIVMRLLSAEAKIKLSDMRSGRMSDDDWTRLARRMSEISEAPLFIDDSPNLTMMEIRAKARRLRQKANLKLIVVDYLQLMTSGKKYESRQVEVSEFSRHLKLLAKELEVPVVAISQLNRGPEQRTDKKPMLADLRESGCLTASTRILRADTGAEVAFGELMRSGERPMVWSLDERLRMVARPMINVFPSGRKEVFRLRLASGREVEATGSHPFMKFEGWTPLAQLKVGDRIAAPRRVPEPIDTQRMPESELISLARMIGDGSCLKNQPIRYEPVDEANLAAVTVSAAHSDRAAIRDDYLAARVPSLRPARQRLPRGRCTPIAAWLAGLGLFTKRSHEKCVPEAVFRAPNDQVALFLRHLWSAGGSVRWDPTNGQGRVYYGSTSRRLIDDVAQLLLRVGIFSWITHAPKLGGHDSWRLHIHGAKDQVRFLRHVGVHGAEAVAAQEMLRQLKGPVRNPNLDSAPKKVWAQVRNRLSAKQMMDIQLHEPTMWKHSPSRSRPHRAEARIEDRAIHELARGDAYWDTVVEITSIGDQHVFDGTVSGTHNFVANGISLHNSLEQDADVVILLHRPDAFDRDDPRGGEADFILAKHRNGPTKTVTVAHQLHLSRFANMAR.

The tract at residues 1–25 is disordered; it reads MAVVDDLAPGMDSSPPSEDYGRQPP. The 268-residue stretch at 195–462 folds into the SF4 helicase; first part domain; it reads SGGLARGVAT…KEVFRLRLAS (268 aa). 226–233 is a binding site for ATP; it reads ARPGVGKS. The region spanning 582–660 is the DOD-type homing endonuclease domain; the sequence is IAAWLAGLGL…VAQLLLRVGI (79 aa). Positions 612 to 874 constitute an SF4 helicase; second part domain; that stretch reads QVALFLRHLW…HLSRFANMAR (263 aa).

The protein belongs to the helicase family. DnaB subfamily. As to quaternary structure, homohexamer. Interacts with single-stranded binding protein (SSB, Rv0054). Co-immunoprecipitates with DarG in the presence and absence of darT. Post-translationally, this protein undergoes a protein self splicing that involves a post-translational excision of the intervening region (intein) followed by peptide ligation.

It carries out the reaction Couples ATP hydrolysis with the unwinding of duplex DNA at the replication fork by translocating in the 5'-3' direction. This creates two antiparallel DNA single strands (ssDNA). The leading ssDNA polymer is the template for DNA polymerase III holoenzyme which synthesizes a continuous strand.. It catalyses the reaction ATP + H2O = ADP + phosphate + H(+). In vitro 5'-3' helicase activity is stimulated by single-stranded binding protein (SSB, Rv0054) at low concentrations (0.02 to 0.16 uM), decreases at intermediate concentrations (0.32 to 0.64 uM), and is inhibited at higher concentrations. The main replicative DNA helicase, it participates in initiation and elongation during chromosome replication. Travels ahead of the DNA replisome, separating dsDNA into templates for DNA synthesis. A 5'-3' DNA helicase with DNA-dependent ATPase activity; helicase is equally active with ATP and dATP. Requires single-stranded (ss)DNA for helicase activity. Functionally, the intein is an endonuclease. This chain is Replicative DNA helicase DnaB (dnaB), found in Mycobacterium tuberculosis (strain ATCC 25618 / H37Rv).